We begin with the raw amino-acid sequence, 232 residues long: H-2 class II histocompatibility antigen, E-S beta chain (232 aa).

The tract at residues tryptophan 1–valine 90 is beta-1. At tryptophan 1 to lysine 193 the chain is on the extracellular side. 2 disulfide bridges follow: cysteine 10-cysteine 74 and cysteine 112-cysteine 168. An N-linked (GlcNAc...) asparagine glycan is attached at asparagine 14. Positions glutamate 91–lysine 193 are beta-2. The region spanning proline 92–glutamate 182 is the Ig-like C1-type domain. The helical transmembrane segment at methionine 194–phenylalanine 216 threads the bilayer. Over arginine 217–serine 232 the chain is Cytoplasmic.

It belongs to the MHC class II family. Post-translationally, ubiquitinated in immature dendritic cells leading to down-regulation of MHC class II.

The protein localises to the membrane. This chain is H-2 class II histocompatibility antigen, E-S beta chain (H2-Eb1), found in Mus musculus (Mouse).